A 178-amino-acid chain; its full sequence is ATP-dependent protease subunit HslV (178 aa).

Residue Thr7 is part of the active site. The Na(+) site is built by Gly162, Cys165, and Thr168.

This sequence belongs to the peptidase T1B family. HslV subfamily. As to quaternary structure, a double ring-shaped homohexamer of HslV is capped on each side by a ring-shaped HslU homohexamer. The assembly of the HslU/HslV complex is dependent on binding of ATP.

It is found in the cytoplasm. The catalysed reaction is ATP-dependent cleavage of peptide bonds with broad specificity.. Its activity is regulated as follows. Allosterically activated by HslU binding. In terms of biological role, protease subunit of a proteasome-like degradation complex believed to be a general protein degrading machinery. The protein is ATP-dependent protease subunit HslV of Paraburkholderia phymatum (strain DSM 17167 / CIP 108236 / LMG 21445 / STM815) (Burkholderia phymatum).